The sequence spans 60 residues: MAQIKITLTKSPIGRIPSQRKTVVALGLGKLNSSVIKEDNAAIRGMITAVSHLVTVEEVN.

Belongs to the universal ribosomal protein uL30 family. As to quaternary structure, part of the 50S ribosomal subunit.

The protein is Large ribosomal subunit protein uL30 of Streptococcus pneumoniae serotype 2 (strain D39 / NCTC 7466).